The following is a 346-amino-acid chain: Biotin synthase (346 aa).

In terms of domain architecture, Radical SAM core spans 38–256; it reads RQVQVSTLLS…IAVARIMMPT (219 aa). Residues Cys-53, Cys-57, and Cys-60 each contribute to the [4Fe-4S] cluster site. Positions 97, 128, 188, and 260 each coordinate [2Fe-2S] cluster.

This sequence belongs to the radical SAM superfamily. Biotin synthase family. Homodimer. [4Fe-4S] cluster is required as a cofactor. The cofactor is [2Fe-2S] cluster.

The catalysed reaction is (4R,5S)-dethiobiotin + (sulfur carrier)-SH + 2 reduced [2Fe-2S]-[ferredoxin] + 2 S-adenosyl-L-methionine = (sulfur carrier)-H + biotin + 2 5'-deoxyadenosine + 2 L-methionine + 2 oxidized [2Fe-2S]-[ferredoxin]. It participates in cofactor biosynthesis; biotin biosynthesis; biotin from 7,8-diaminononanoate: step 2/2. In terms of biological role, catalyzes the conversion of dethiobiotin (DTB) to biotin by the insertion of a sulfur atom into dethiobiotin via a radical-based mechanism. This Escherichia coli O6:H1 (strain CFT073 / ATCC 700928 / UPEC) protein is Biotin synthase.